The sequence spans 793 residues: Endonuclease MutS2 (793 aa).

335–342 (GPNTGGKT) contributes to the ATP binding site. In terms of domain architecture, Smr spans 718–793 (IDVRGYNLEE…ESGVTIVELR (76 aa)).

The protein belongs to the DNA mismatch repair MutS family. MutS2 subfamily. Homodimer. Binds to stalled ribosomes, contacting rRNA.

Its function is as follows. Endonuclease that is involved in the suppression of homologous recombination and thus may have a key role in the control of bacterial genetic diversity. In terms of biological role, acts as a ribosome collision sensor, splitting the ribosome into its 2 subunits. Detects stalled/collided 70S ribosomes which it binds and splits by an ATP-hydrolysis driven conformational change. Acts upstream of the ribosome quality control system (RQC), a ribosome-associated complex that mediates the extraction of incompletely synthesized nascent chains from stalled ribosomes and their subsequent degradation. Probably generates substrates for RQC. The chain is Endonuclease MutS2 from Acetivibrio thermocellus (strain ATCC 27405 / DSM 1237 / JCM 9322 / NBRC 103400 / NCIMB 10682 / NRRL B-4536 / VPI 7372) (Clostridium thermocellum).